Reading from the N-terminus, the 362-residue chain is UDP-N-acetylglucosamine--N-acetylmuramyl-(pentapeptide) pyrophosphoryl-undecaprenol N-acetylglucosamine transferase (362 aa).

Residues 10-12, Asn-124, Ser-194, Ile-249, and Gln-294 each bind UDP-N-acetyl-alpha-D-glucosamine; that span reads TGG.

It belongs to the glycosyltransferase 28 family. MurG subfamily.

The protein localises to the cell membrane. The catalysed reaction is Mur2Ac(oyl-L-Ala-gamma-D-Glu-L-Lys-D-Ala-D-Ala)-di-trans,octa-cis-undecaprenyl diphosphate + UDP-N-acetyl-alpha-D-glucosamine = beta-D-GlcNAc-(1-&gt;4)-Mur2Ac(oyl-L-Ala-gamma-D-Glu-L-Lys-D-Ala-D-Ala)-di-trans,octa-cis-undecaprenyl diphosphate + UDP + H(+). It participates in cell wall biogenesis; peptidoglycan biosynthesis. Functionally, cell wall formation. Catalyzes the transfer of a GlcNAc subunit on undecaprenyl-pyrophosphoryl-MurNAc-pentapeptide (lipid intermediate I) to form undecaprenyl-pyrophosphoryl-MurNAc-(pentapeptide)GlcNAc (lipid intermediate II). This chain is UDP-N-acetylglucosamine--N-acetylmuramyl-(pentapeptide) pyrophosphoryl-undecaprenol N-acetylglucosamine transferase, found in Pediococcus pentosaceus (strain ATCC 25745 / CCUG 21536 / LMG 10740 / 183-1w).